We begin with the raw amino-acid sequence, 909 residues long: SCY1-like protein 2 B (909 aa).

Residues 39-343 (YELLDQIGSA…ALDFTGSNFF (305 aa)) form the Protein kinase domain. 7 HEAT repeats span residues 311–348 (SIPS…SDAR), 350–382 (RALR…DFDS), 383–401 (RVLR…RNLV), 402–439 (LQPI…TASG), 465–502 (VLPL…VVRQ), 499–537 (VVRQ…TLDK), and 578–617 (FTAE…KIEE). 2 disordered regions span residues 624–772 (NDSG…VAST) and 804–909 (SASL…LDLL). Polar residues-rich tracts occupy residues 638–648 (NGLQFQSSTQI), 678–712 (PASS…TAPT), 724–747 (RQSS…TSFA), 804–828 (SASL…QDPL), and 835–852 (KQSQ…NNQK).

This sequence belongs to the protein kinase superfamily. In terms of assembly, interacts with VTI11, VTI12 and CHC1. In terms of tissue distribution, expressed in roots, seedlings, leaves, stems, flowers, and, at low levels, in siliques.

The protein localises to the golgi apparatus membrane. Its subcellular location is the golgi apparatus. It localises to the trans-Golgi network membrane. The protein resides in the prevacuolar compartment membrane. Probably inactive kinase. Component of the AP2-containing clathrin coat that regulates clathrin-dependent trafficking at plasma membrane, TGN and endosomal system. Together with SCYL2B, required for cell growth, plant growth and development. Essential for polarized root hair development probably by mediating the root hair tip localization of cellulose synthase-like D3 (CSLD3). The protein is SCY1-like protein 2 B of Arabidopsis thaliana (Mouse-ear cress).